Consider the following 117-residue polypeptide: NADH-ubiquinone oxidoreductase chain 3 (117 aa).

The next 3 helical transmembrane spans lie at 4–24 (IIII…LASI), 60–80 (ITII…MIII), and 86–106 (IMIW…GLYH).

It belongs to the complex I subunit 3 family.

Its subcellular location is the mitochondrion membrane. The catalysed reaction is a ubiquinone + NADH + 5 H(+)(in) = a ubiquinol + NAD(+) + 4 H(+)(out). Its function is as follows. Core subunit of the mitochondrial membrane respiratory chain NADH dehydrogenase (Complex I) that is believed to belong to the minimal assembly required for catalysis. Complex I functions in the transfer of electrons from NADH to the respiratory chain. The immediate electron acceptor for the enzyme is believed to be ubiquinone. The polypeptide is NADH-ubiquinone oxidoreductase chain 3 (mt:ND3) (Drosophila yakuba (Fruit fly)).